The following is a 180-amino-acid chain: ATP-dependent protease subunit HslV (180 aa).

T7 is an active-site residue. Na(+) contacts are provided by A164, C167, and T170.

This sequence belongs to the peptidase T1B family. HslV subfamily. As to quaternary structure, a double ring-shaped homohexamer of HslV is capped on each side by a ring-shaped HslU homohexamer. The assembly of the HslU/HslV complex is dependent on binding of ATP.

Its subcellular location is the cytoplasm. The catalysed reaction is ATP-dependent cleavage of peptide bonds with broad specificity.. With respect to regulation, allosterically activated by HslU binding. Functionally, protease subunit of a proteasome-like degradation complex believed to be a general protein degrading machinery. The chain is ATP-dependent protease subunit HslV from Brevibacillus brevis (strain 47 / JCM 6285 / NBRC 100599).